Reading from the N-terminus, the 761-residue chain is RNA-binding protein 12B (761 aa).

Residues Ser98, Ser101, and Ser112 each carry the phosphoserine modification. Residue Lys114 forms a Glycyl lysine isopeptide (Lys-Gly) (interchain with G-Cter in SUMO2) linkage. Residues Ser120–Thr147 form a disordered region. Lys151 is covalently cross-linked (Glycyl lysine isopeptide (Lys-Gly) (interchain with G-Cter in SUMO2)). Positions Pro155–Glu230 constitute an RRM 1 domain. Positions Leu247 to Arg262 are enriched in basic and acidic residues. The interval Leu247–Ser278 is disordered. A phosphoserine mark is found at Ser250 and Ser254. Residues His263–Ser278 show a composition bias toward basic residues. Position 276 is a phosphothreonine (Thr276). Ser278, Ser280, Ser292, and Ser294 each carry phosphoserine. The RRM 2 domain maps to Phe284–Arg360. Lys319 is modified (N6-acetyllysine). A Glycyl lysine isopeptide (Lys-Gly) (interchain with G-Cter in SUMO2) cross-link involves residue Lys335. Residues Lys372–Gly384 are compositionally biased toward basic and acidic residues. The disordered stretch occupies residues Lys372–Gln392. Ser377 is subject to Phosphoserine. Positions Leu400–Glu477 constitute an RRM 3 domain. Residues Lys514 and Lys541 each participate in a glycyl lysine isopeptide (Lys-Gly) (interchain with G-Cter in SUMO2) cross-link. The segment covering Asp538–Arg621 has biased composition (basic and acidic residues). Residues Asp538–Leu690 are disordered. Phosphoserine occurs at positions 575 and 591. Polar residues predominate over residues Leu627–Thr654. Residues Ser661–Gly672 are compositionally biased toward low complexity.

The protein is RNA-binding protein 12B (RBM12B) of Pongo abelii (Sumatran orangutan).